The following is a 304-amino-acid chain: UDP-3-O-acyl-N-acetylglucosamine deacetylase (304 aa).

The Zn(2+) site is built by H77, H233, and D237. H260 serves as the catalytic Proton donor.

The protein belongs to the LpxC family. Zn(2+) serves as cofactor.

The enzyme catalyses a UDP-3-O-[(3R)-3-hydroxyacyl]-N-acetyl-alpha-D-glucosamine + H2O = a UDP-3-O-[(3R)-3-hydroxyacyl]-alpha-D-glucosamine + acetate. It functions in the pathway glycolipid biosynthesis; lipid IV(A) biosynthesis; lipid IV(A) from (3R)-3-hydroxytetradecanoyl-[acyl-carrier-protein] and UDP-N-acetyl-alpha-D-glucosamine: step 2/6. Catalyzes the hydrolysis of UDP-3-O-myristoyl-N-acetylglucosamine to form UDP-3-O-myristoylglucosamine and acetate, the committed step in lipid A biosynthesis. This is UDP-3-O-acyl-N-acetylglucosamine deacetylase from Lawsonia intracellularis (strain PHE/MN1-00).